Here is a 252-residue protein sequence, read N- to C-terminus: Protein HEAT-INDUCED TAS1 TARGET 2 (252 aa).

This sequence belongs to the heat induced plant HTT protein family. As to expression, expressed ubiquitously, including in seedlings, leaves, stems, inflorescences and siliques.

The protein resides in the cytoplasm. The protein localises to the nucleus. Its function is as follows. Mediates both basal and acquired thermotolerance via HSFA1s-directed pathways (e.g. HSFA1A, HSFA1B, and HSFA1D). Triggers the expression of HSFA1A and HSFA1B. The polypeptide is Protein HEAT-INDUCED TAS1 TARGET 2 (Arabidopsis thaliana (Mouse-ear cress)).